The following is a 106-amino-acid chain: Large ribosomal subunit protein eL42 (106 aa).

Residues 34–53 (YAQGRRRYDRKRSGYGGQTK) are disordered. Lys-53 carries the post-translational modification N6-methyllysine.

This sequence belongs to the eukaryotic ribosomal protein eL42 family.

Its subcellular location is the cytoplasm. This chain is Large ribosomal subunit protein eL42 (RPL36AL), found in Pongo abelii (Sumatran orangutan).